We begin with the raw amino-acid sequence, 292 residues long: MNNHFKCIGIVGHPRHPTALTTHEMLYRWLCDQGYEVIVEQQIAHELQLKNVPTGTLAKIGQQADLAVVVGGDGNMLGAARTLARYDINVIGINRGNLGFLTDLDPDNALQQLSDVLEGRYISEKRFLLEAQVCQQERQKRISTAINEVVLHPGKVAHMIEFEVYIDETFAFSQRSDGLIISTPTGSTAYSLSAGGPILTPSLDAITLVPMFPHTLSARPLVINSSSTIRLRFSHRRSDLEISCDSQIALPIQEGEDVLIRRCDYHLNLIHPKDYSYFNTLSTKLGWSKKLF.

Residue D73 is the Proton acceptor of the active site. NAD(+)-binding positions include 73–74 (DG), 147–148 (NE), H158, R175, D177, 188–193 (TAYSLS), and Q247.

The protein belongs to the NAD kinase family. The cofactor is a divalent metal cation.

The protein localises to the cytoplasm. It carries out the reaction NAD(+) + ATP = ADP + NADP(+) + H(+). In terms of biological role, involved in the regulation of the intracellular balance of NAD and NADP, and is a key enzyme in the biosynthesis of NADP. Catalyzes specifically the phosphorylation on 2'-hydroxyl of the adenosine moiety of NAD to yield NADP. This Salmonella choleraesuis (strain SC-B67) protein is NAD kinase.